A 181-amino-acid chain; its full sequence is Cyclic phosphodiesterase (181 aa).

His42 serves as the catalytic Proton donor/acceptor. Thr44 serves as a coordination point for substrate. Cystine bridges form between Cys64/Cys177 and Cys104/Cys110. The Proton donor/acceptor role is filled by His119. Substrate contacts are provided by Ser121 and Tyr124.

The protein belongs to the 2H phosphoesterase superfamily. CPD1 family. As to expression, expressed in leaves, stems, roots, floral buds and germinating seeds.

The protein localises to the cytoplasm. It catalyses the reaction ADP-alpha-D-ribose 1'',2''-cyclic phosphate + H2O = ADP-alpha-D-ribose 1''-phosphate + H(+). It carries out the reaction 2',3'-cyclophospho-AMP + H2O = adenosine 2'-phosphate + H(+). The catalysed reaction is 2',3'-cyclophospho-GMP + H2O = guanosine 2'-phosphate + H(+). The enzyme catalyses 2',3'-cyclophospho-UMP + H2O = uridine 2'-phosphate + H(+). It catalyses the reaction 2',3'-cyclophospho-CMP + H2O = cytidine 2'-phosphate + H(+). Inhibited by Cu(2+) and Zn(2+) at 0.5 mM by 93 and 87% respectively. Not inhibited by Ca(2+), Mg(2+), Co(2+), Ni(2+), and EDTA at 0.5 mM. In terms of biological role, hydrolyzes ADP-ribose 1'',2''-cyclic phosphate (Appr&gt;1) that is produced during tRNA splicing into ADP-ribose 1''-phosphate (Appr-1''p). Also acts on nucleoside 2',3'-cyclic phosphates. This chain is Cyclic phosphodiesterase, found in Arabidopsis thaliana (Mouse-ear cress).